A 200-amino-acid chain; its full sequence is Large ribosomal subunit protein uL4 (200 aa).

The interval 43–71 is disordered; it reads RAQKTRAEVSGSGKKPWRQKGTGRARSGD.

The protein belongs to the universal ribosomal protein uL4 family. As to quaternary structure, part of the 50S ribosomal subunit.

One of the primary rRNA binding proteins, this protein initially binds near the 5'-end of the 23S rRNA. It is important during the early stages of 50S assembly. It makes multiple contacts with different domains of the 23S rRNA in the assembled 50S subunit and ribosome. Its function is as follows. Forms part of the polypeptide exit tunnel. The sequence is that of Large ribosomal subunit protein uL4 from Mannheimia succiniciproducens (strain KCTC 0769BP / MBEL55E).